Here is a 321-residue protein sequence, read N- to C-terminus: CRISPR-associated aCascade subunit Cas7/Csa2 2 (321 aa).

This sequence belongs to the CRISPR-associated protein Cas7/Cst2/DevR family. Subtype I-a/Apern subfamily. As to quaternary structure, part of the aCascade ribonucleoprotein complex, minimally composed of Csa2 and Cas5a, which binds crRNA. Other possible components of aCascade in strain P1 are Cas6b (SSO1437) and Csa5 (SSO1443), while SSO1399, Cas5b (SSO1400) and SSO1401 have sometimes been seen weakly associated. Csa2 is probably the major RNA-binding subunit. The Csa2-Cas5a-crRNA complex also binds target DNA homologous to crRNA, probably forming an R-loop. Purified aCascade forms a filament about 6 nm in width.

Its function is as follows. CRISPR (clustered regularly interspaced short palindromic repeat) is an adaptive immune system that provides protection against mobile genetic elements (viruses, transposable elements and conjugative plasmids). CRISPR clusters contain spacers, sequences complementary to antecedent mobile elements, and target invading nucleic acids. CRISPR clusters are transcribed and processed into CRISPR RNA (crRNA). In Saccharolobus solfataricus (strain ATCC 35092 / DSM 1617 / JCM 11322 / P2) (Sulfolobus solfataricus), this protein is CRISPR-associated aCascade subunit Cas7/Csa2 2 (csa2b).